Consider the following 199-residue polypeptide: Recombination protein RecR (199 aa).

The C4-type zinc-finger motif lies at 58 to 73 (CSVCNNITDVDPCVFC). The region spanning 81–176 (RLVCVVEEPT…RLTRIATGVP (96 aa)) is the Toprim domain.

It belongs to the RecR family.

Functionally, may play a role in DNA repair. It seems to be involved in an RecBC-independent recombinational process of DNA repair. It may act with RecF and RecO. This is Recombination protein RecR from Acidobacterium capsulatum (strain ATCC 51196 / DSM 11244 / BCRC 80197 / JCM 7670 / NBRC 15755 / NCIMB 13165 / 161).